We begin with the raw amino-acid sequence, 480 residues long: Ribosomal RNA small subunit methyltransferase F (480 aa).

S-adenosyl-L-methionine-binding positions include 126–132 (AAAPGSK), glutamate 150, aspartate 177, and aspartate 195. Cysteine 248 acts as the Nucleophile in catalysis.

It belongs to the class I-like SAM-binding methyltransferase superfamily. RsmB/NOP family.

It localises to the cytoplasm. It catalyses the reaction cytidine(1407) in 16S rRNA + S-adenosyl-L-methionine = 5-methylcytidine(1407) in 16S rRNA + S-adenosyl-L-homocysteine + H(+). Its function is as follows. Specifically methylates the cytosine at position 1407 (m5C1407) of 16S rRNA. The polypeptide is Ribosomal RNA small subunit methyltransferase F (Cronobacter sakazakii (strain ATCC BAA-894) (Enterobacter sakazakii)).